The primary structure comprises 382 residues: Galactokinase (382 aa).

34-37 (EHTD) lines the substrate pocket. 124–130 (GAGLSSS) is a binding site for ATP. Mg(2+) is bound by residues serine 130 and glutamate 162. Residue aspartate 174 is the Proton acceptor of the active site. Tyrosine 223 lines the substrate pocket.

It belongs to the GHMP kinase family. GalK subfamily.

It localises to the cytoplasm. The catalysed reaction is alpha-D-galactose + ATP = alpha-D-galactose 1-phosphate + ADP + H(+). Its pathway is carbohydrate metabolism; galactose metabolism. In terms of biological role, catalyzes the transfer of the gamma-phosphate of ATP to D-galactose to form alpha-D-galactose-1-phosphate (Gal-1-P). The polypeptide is Galactokinase (Salmonella schwarzengrund (strain CVM19633)).